A 1026-amino-acid chain; its full sequence is Multidrug resistance protein MdtC (1026 aa).

At 1–6 (MRFFAL) the chain is on the cytoplasmic side. A helical membrane pass occupies residues 7 to 29 (FIYRPVATILIAAAITLCGILGF). Topologically, residues 30–335 (RLLPVAPLPQ…TIRASLQEVE (306 aa)) are periplasmic. A helical membrane pass occupies residues 336–353 (ETLAISVALVILVVFLFL). Topologically, residues 354–359 (RSGRAT) are cytoplasmic. A helical transmembrane segment spans residues 360 to 379 (LIPAVAVPVSLIGTFAAMYL). Over 380 to 388 (CGFSLNNLS) the chain is Periplasmic. The chain crosses the membrane as a helical span at residues 389 to 411 (LMALTIATGFVVDDAIVVLENIA). At 412–430 (RHLEARMKPLQAALQGTRE) the chain is on the cytoplasmic side. Residues 431-453 (VGFTVISMSLSLVAVFLPLLLMG) traverse the membrane as a helical segment. Residues 454–467 (GLPGRLLREFAVTL) lie on the Periplasmic side of the membrane. The helical transmembrane segment at 468 to 490 (SVAIGISLVVSLTLTPMMCGWML) threads the bilayer. Residues 491–852 (KSSKPRTQPR…QVFQQTMNSQ (362 aa)) lie on the Cytoplasmic side of the membrane. A helical membrane pass occupies residues 853-875 (LILIVAAIATVYIVLGILYESYV). Over 876-894 (HPLTILSTLPSAGVGALLA) the chain is Periplasmic. Residues 895–917 (LELFNAPFSLIALIGIMLLIGIV) form a helical membrane-spanning segment. The Cytoplasmic portion of the chain corresponds to 918 to 947 (KKNAIMMVDFALEAQRSGGLTPEQAIFQAC). The chain crosses the membrane as a helical span at residues 948–970 (LLRFRPIMMTTLAALFGALPLVL). Residues 971 to 984 (SGGDGSELRQPLGI) are Periplasmic-facing. The chain crosses the membrane as a helical span at residues 985-1007 (TIVGGLVMSQLLTLYTTPVVYLF). At 1008-1026 (FDRLRLRFSRKNSKPVVEI) the chain is on the cytoplasmic side.

Belongs to the resistance-nodulation-cell division (RND) (TC 2.A.6) family. MdtC subfamily. In terms of assembly, part of a tripartite efflux system composed of MdtA, MdtB and MdtC. MdtC forms a heteromultimer with MdtB.

Its subcellular location is the cell inner membrane. This chain is Multidrug resistance protein MdtC, found in Salmonella typhi.